The chain runs to 436 residues: Ribulose bisphosphate carboxylase large chain (436 aa).

Substrate is bound by residues Asn-104 and Thr-154. The active-site Proton acceptor is the Lys-156. Residue Lys-158 participates in substrate binding. The Mg(2+) site is built by Lys-182, Asp-184, and Glu-185. An N6-carboxylysine modification is found at Lys-182. His-275 functions as the Proton acceptor in the catalytic mechanism. Arg-276, His-308, and Ser-360 together coordinate substrate.

It belongs to the RuBisCO large chain family. Type I subfamily. In terms of assembly, heterohexadecamer of 8 large chains and 8 small chains; disulfide-linked. The disulfide link is formed within the large subunit homodimers. Requires Mg(2+) as cofactor. The disulfide bond which can form in the large chain dimeric partners within the hexadecamer appears to be associated with oxidative stress and protein turnover.

The protein localises to the plastid. It localises to the chloroplast. It carries out the reaction 2 (2R)-3-phosphoglycerate + 2 H(+) = D-ribulose 1,5-bisphosphate + CO2 + H2O. It catalyses the reaction D-ribulose 1,5-bisphosphate + O2 = 2-phosphoglycolate + (2R)-3-phosphoglycerate + 2 H(+). In terms of biological role, ruBisCO catalyzes two reactions: the carboxylation of D-ribulose 1,5-bisphosphate, the primary event in carbon dioxide fixation, as well as the oxidative fragmentation of the pentose substrate in the photorespiration process. Both reactions occur simultaneously and in competition at the same active site. This is Ribulose bisphosphate carboxylase large chain from Euglena anabaena (Euglenaria anabaena).